The chain runs to 615 residues: Proteasome-associated ATPase (615 aa).

Residues 1–27 form a disordered region; it reads MSESERSEASEVFGTSPDSRLSSEDAA. Residues 22 to 99 adopt a coiled-coil conformation; that stretch reads SSEDAAELEQ…LREEVDRLGQ (78 aa). 302 to 307 lines the ATP pocket; sequence GCGKTL. Residues 614–615 form a docks into pockets in the proteasome alpha-ring region; sequence YL.

Belongs to the AAA ATPase family. As to quaternary structure, homohexamer. Assembles into a hexameric ring structure that caps the 20S proteasome core. Strongly interacts with the prokaryotic ubiquitin-like protein Pup through a hydrophobic interface; the interacting region of ARC lies in its N-terminal coiled-coil domain. There is one Pup binding site per ARC hexamer ring. Upon ATP-binding, the C-terminus of ARC interacts with the alpha-rings of the proteasome core, possibly by binding to the intersubunit pockets.

Its pathway is protein degradation; proteasomal Pup-dependent pathway. ATPase which is responsible for recognizing, binding, unfolding and translocation of pupylated proteins into the bacterial 20S proteasome core particle. May be essential for opening the gate of the 20S proteasome via an interaction with its C-terminus, thereby allowing substrate entry and access to the site of proteolysis. Thus, the C-termini of the proteasomal ATPase may function like a 'key in a lock' to induce gate opening and therefore regulate proteolysis. In Mycolicibacterium vanbaalenii (strain DSM 7251 / JCM 13017 / BCRC 16820 / KCTC 9966 / NRRL B-24157 / PYR-1) (Mycobacterium vanbaalenii), this protein is Proteasome-associated ATPase.